Consider the following 782-residue polypeptide: Tripartite terminase subunit 1 (782 aa).

A C3H1-type zinc finger spans residues 190-218 (CLQCYEELAAVPNQGRSILKRLRGLLCDH). 666 to 673 (YNEAFGKE) is a binding site for ATP. Residues 727 to 740 (APPPPAAPSPPPAE) are compositionally biased toward pro residues. The segment at 727–754 (APPPPAAPSPPPAEPATTAGASRKRPAV) is disordered.

It belongs to the herpesviridae TRM1 protein family. Associates with TRM2 and TRM3 to form the tripartite terminase complex. Interacts with portal protein.

It is found in the host nucleus. Functionally, component of the molecular motor that translocates viral genomic DNA in empty capsid during DNA packaging. Forms a tripartite terminase complex together with TRM2 and TRM3 in the host cytoplasm. Once the complex reaches the host nucleus, it interacts with the capsid portal vertex. This portal forms a ring in which genomic DNA is translocated into the capsid. TRM1 carries an endonuclease activity that plays an important role for the cleavage of concatemeric viral DNA into unit length genomes. The chain is Tripartite terminase subunit 1 from Tupaiid herpesvirus (strain 2) (TuHV-2).